Consider the following 448-residue polypeptide: uncharacterized protein (448 aa).

Residues 428-440 show a composition bias toward polar residues; it reads PFKTDCDPNNDND. Residues 428–448 form a disordered region; it reads PFKTDCDPNNDNDLTPPAVFG.

This is an uncharacterized protein from Mycoplasma pneumoniae (strain ATCC 29342 / M129 / Subtype 1) (Mycoplasmoides pneumoniae).